The following is a 457-amino-acid chain: Protein unc-93 homolog A (457 aa).

Transmembrane regions (helical) follow at residues 8 to 28 (VLVL…LQSL), 42 to 62 (ALST…PVLI), 65 to 85 (LGCK…SLGN), 86 to 106 (FYAS…GAAA), and 140 to 160 (IFFL…SLVF). Asparagine 190 carries N-linked (GlcNAc...) asparagine glycosylation. A run of 6 helical transmembrane segments spans residues 202-222 (TLLG…AVFL), 257-277 (LRLL…LSGD), 291-311 (FVGY…VLFG), 320-340 (TVLF…LLLW), 344-364 (PSQL…DAVW), and 395-415 (FVIA…YVLL). A disordered region spans residues 438 to 457 (GPLAAGRTKPAEDGATQTKL).

Belongs to the unc-93 family.

The protein localises to the cell membrane. The chain is Protein unc-93 homolog A (UNC93A) from Bos taurus (Bovine).